The sequence spans 607 residues: UvrABC system protein C (607 aa).

Residues 16 to 94 enclose the GIY-YIG domain; it reads GRPGVYRMFD…IKEWRPPYNI (79 aa). The UVR domain occupies 203–238; that stretch reads QQLGNELNAEMEKAAMALDFEKAAELRDQIALLRRV.

It belongs to the UvrC family. As to quaternary structure, interacts with UvrB in an incision complex.

The protein resides in the cytoplasm. Functionally, the UvrABC repair system catalyzes the recognition and processing of DNA lesions. UvrC both incises the 5' and 3' sides of the lesion. The N-terminal half is responsible for the 3' incision and the C-terminal half is responsible for the 5' incision. This Pseudomonas putida (strain ATCC 47054 / DSM 6125 / CFBP 8728 / NCIMB 11950 / KT2440) protein is UvrABC system protein C.